Consider the following 244-residue polypeptide: Small ribosomal subunit protein uS3 (244 aa).

The region spanning 39 to 107 is the KH type-2 domain; it reads VREMLRKKLA…PAHINVTEVR (69 aa). A disordered region spans residues 213-244; it reads VGQEKQDDSPRNDRNDRGDRGDRPSRPAREAR. Basic and acidic residues predominate over residues 216–244; it reads EKQDDSPRNDRNDRGDRGDRPSRPAREAR.

It belongs to the universal ribosomal protein uS3 family. As to quaternary structure, part of the 30S ribosomal subunit. Forms a tight complex with proteins S10 and S14.

Its function is as follows. Binds the lower part of the 30S subunit head. Binds mRNA in the 70S ribosome, positioning it for translation. In Xanthomonas oryzae pv. oryzae (strain MAFF 311018), this protein is Small ribosomal subunit protein uS3.